The following is a 294-amino-acid chain: MIKQYLQVTKPGIIFGNLISVIGGFLLASKGVIDYPLFISTLLGVSLVVASGCVFNNYIDRDIDRIMERTKNRVLVKGLIDPKISLIYASILGIAGIVLLYAAANALAMQLAIIGFVVYVGVYSLYMKRKSVYGTLIGSLSGAAPPVIGYCAVTGQFDTGALILLLIFSLWQMPHSYAIAIFRFKDYQAANIPVLPVIKGISVAKNHIILYILAFMIATLMLAISGYAGYKYLVVAAAVSVWWLGMALSGYKTDNDRIWARKLFIFSIVAITSLSVMMSIDPHVPSEAFLTYVR.

Transmembrane regions (helical) follow at residues 13–33, 35–55, 84–104, 107–127, 132–152, 162–182, 208–228, 229–249, and 264–284; these read IIFG…KGVI, YPLF…GCVF, ISLI…YAAA, LAMQ…SLYM, VYGT…GYCA, LILL…IAIF, IILY…SGYA, GYKY…MALS, and FIFS…DPHV.

It belongs to the UbiA prenyltransferase family. Protoheme IX farnesyltransferase subfamily.

The protein resides in the cell inner membrane. The catalysed reaction is heme b + (2E,6E)-farnesyl diphosphate + H2O = Fe(II)-heme o + diphosphate. Its pathway is porphyrin-containing compound metabolism; heme O biosynthesis; heme O from protoheme: step 1/1. Functionally, converts heme B (protoheme IX) to heme O by substitution of the vinyl group on carbon 2 of heme B porphyrin ring with a hydroxyethyl farnesyl side group. The polypeptide is Protoheme IX farnesyltransferase (Photorhabdus laumondii subsp. laumondii (strain DSM 15139 / CIP 105565 / TT01) (Photorhabdus luminescens subsp. laumondii)).